Consider the following 359-residue polypeptide: MNPCQIFASLVMSICCHILSSTAWSVNNFLMTGPKAYLAYTSSVQAGAQSGIEECKHQFAWDRWNCPESALQLSTHKGLRSATRETAFVHAISAAGVMYTLTKNCSMGDFENCGCDDSKIGKMGGRGWVWGGCSDNVNFGDRIAKLFVDALENGHDSRAAVNLHNNEAGRLAVKATLKRTCKCHGLSGSCSIQTCWMQLADFRDIGSYLKIKHDQARKLEMDKIRMRAGNSADNRGAIADTFSAVARTELIFMEDSPDYCVKNLSMGLHGTEGRECLQSGKNLSQWERRSCRRLCHECGLKVEERRIETVSSCNCKFHWCCTVKCETCTQTVTRYFCAKRHRNRRPHNHSRKRQHTRRG.

Positions 1–25 are cleaved as a signal peptide; it reads MNPCQIFASLVMSICCHILSSTAWS. Cysteine 55 and cysteine 66 are oxidised to a cystine. Asparagine 104 carries N-linked (GlcNAc...) asparagine glycosylation. 10 cysteine pairs are disulfide-bonded: cysteine 105/cysteine 113, cysteine 115/cysteine 133, cysteine 181/cysteine 195, cysteine 183/cysteine 190, cysteine 260/cysteine 298, cysteine 276/cysteine 291, cysteine 295/cysteine 337, cysteine 313/cysteine 328, cysteine 315/cysteine 325, and cysteine 320/cysteine 321. A lipid anchor (O-palmitoleoyl serine) is attached at serine 187. 2 N-linked (GlcNAc...) asparagine glycosylation sites follow: asparagine 263 and asparagine 282. Asparagine 348 carries N-linked (GlcNAc...) asparagine glycosylation.

The protein belongs to the Wnt family. Palmitoleoylation is required for efficient binding to frizzled receptors. Depalmitoleoylation leads to Wnt signaling pathway inhibition. Post-translationally, proteolytic processing by tiki1 and tiki2 promotes oxidation and formation of large disulfide-bond oligomers, leading to inactivation of wnt8. In terms of tissue distribution, expressed in the margin of the pregastrula embryo destined to be the future mesoderm.

Its subcellular location is the secreted. It localises to the extracellular space. The protein localises to the extracellular matrix. Functionally, ligand for members of the frizzled family of seven transmembrane receptors. Required for mesoderm and neural ectoderm patterning during gastrulation. Involved in axis formation during embryonic development, via activation of canonical Wnt/CTNNB1 signaling. May be involved in the specification of the spatial patterns of expression of Gsc and other regulatory genes leading to the establishment of the embryonic axis. The protein is Protein Wnt-8a (wnt8a) of Danio rerio (Zebrafish).